Consider the following 159-residue polypeptide: Ecotin (159 aa).

The signal sequence occupies residues methionine 1 to alanine 22. Cysteine 68 and cysteine 105 are joined by a disulfide.

This sequence belongs to the protease inhibitor I11 (ecotin) family. In terms of assembly, homodimer.

It is found in the periplasm. In terms of biological role, general inhibitor of family S1 serine proteases. The sequence is that of Ecotin from Pseudomonas putida (strain ATCC 700007 / DSM 6899 / JCM 31910 / BCRC 17059 / LMG 24140 / F1).